Here is a 288-residue protein sequence, read N- to C-terminus: NAD kinase (288 aa).

The active-site Proton acceptor is aspartate 73. NAD(+) contacts are provided by residues 73 to 74 (DG), arginine 78, 144 to 145 (NE), aspartate 174, 185 to 190 (TAYSLS), and alanine 209.

Belongs to the NAD kinase family. Requires a divalent metal cation as cofactor.

The protein localises to the cytoplasm. The catalysed reaction is NAD(+) + ATP = ADP + NADP(+) + H(+). In terms of biological role, involved in the regulation of the intracellular balance of NAD and NADP, and is a key enzyme in the biosynthesis of NADP. Catalyzes specifically the phosphorylation on 2'-hydroxyl of the adenosine moiety of NAD to yield NADP. The polypeptide is NAD kinase (Porphyromonas gingivalis (strain ATCC 33277 / DSM 20709 / CIP 103683 / JCM 12257 / NCTC 11834 / 2561)).